Consider the following 418-residue polypeptide: uncharacterized protein (418 aa).

The region spanning 7–158 is the N-acetyltransferase domain; that stretch reads IDVRPIAEAE…TGLDPRWSGP (152 aa). Acetyl-CoA is bound by residues 87-89 and 95-100; these read VTV and RRGLLT. The active-site Proton donor is tyrosine 128. Phenylalanine 418 serves as the catalytic Proton acceptor; via carboxylate.

Belongs to the acetyltransferase Eis family. In terms of assembly, homohexamer; trimer of dimers.

This is an uncharacterized protein from Streptomyces avermitilis (strain ATCC 31267 / DSM 46492 / JCM 5070 / NBRC 14893 / NCIMB 12804 / NRRL 8165 / MA-4680).